Here is a 1088-residue protein sequence, read N- to C-terminus: Protein unc-13 homolog D (1088 aa).

The disordered stretch occupies residues 26 to 46 (VRDLQDPPPQATPEVQVQSHH). Residues 92–239 (QPEEHQQMLQ…FKEARKDKGQ (148 aa)) enclose the C2 1 domain. Ca(2+) contacts are provided by aspartate 127 and aspartate 133. Serine 150 is modified (phosphoserine). Residues aspartate 206 and aspartate 208 each coordinate Ca(2+). The tract at residues 240 to 543 (DDFLGNVMLR…AKRVQDHTAA (304 aa)) is interaction with RAB27A. The region spanning 557–675 (FQLYVSLREF…RLALVYCSLI (119 aa)) is the MHD1 domain. Positions 786 to 893 (EDAILPLMKF…ASSRELIQKY (108 aa)) constitute an MHD2 domain. One can recognise a C2 2 domain in the interval 908 to 1033 (RLGAVTVKAS…PGLTGCVEPG (126 aa)). Residues leucine 938, aspartate 939, aspartate 945, aspartate 1003, aspartate 1005, and aspartate 1011 each coordinate Ca(2+).

It belongs to the unc-13 family. In terms of assembly, interacts with RAB27A and DOC2A. Interacts with RhoG; the interaction increases RhoG affinity to the membrane lipids, targets Unc13d to membrane lipids and facilitates cytotoxic granule (CG) docking to the plasma membrane. The cofactor is Ca(2+). In terms of tissue distribution, expressed in lung bronchial epithelium goblet/mucous cells. Also expressed in spleen and testis. Expressed at very low levels in heart muscle, kidney, liver, brain and skeletal muscle.

It is found in the cytoplasm. The protein resides in the membrane. Its subcellular location is the late endosome. The protein localises to the recycling endosome. It localises to the lysosome. In terms of biological role, plays a role in cytotoxic granule exocytosis in lymphocytes. Required for both granule maturation and granule docking and priming at the immunologic synapse. Regulates assembly of recycling and late endosomal structures, leading to the formation of an endosomal exocytic compartment that fuses with perforin-containing granules at the immunologic synapse and licences them for exocytosis. Regulates Ca(2+)-dependent secretory lysosome exocytosis in mast cells. The protein is Protein unc-13 homolog D (Unc13d) of Rattus norvegicus (Rat).